The following is a 1589-amino-acid chain: Mediator of RNA polymerase II transcription subunit 23 (1589 aa).

Residues tyrosine 1381–glutamine 1499 are disordered. The span at threonine 1392–glutamate 1410 shows a compositional bias: basic and acidic residues. Over residues leucine 1457–methionine 1470 the composition is skewed to low complexity.

The protein belongs to the Mediator complex subunit 23 family. As to quaternary structure, component of the Mediator complex.

The protein localises to the nucleus. Its function is as follows. Component of the Mediator complex, a coactivator involved in the regulated transcription of nearly all RNA polymerase II-dependent genes. Mediator functions as a bridge to convey information from gene-specific regulatory proteins to the basal RNA polymerase II transcription machinery. Mediator is recruited to promoters by direct interactions with regulatory proteins and serves as a scaffold for the assembly of a functional preinitiation complex with RNA polymerase II and the general transcription factors. In Caenorhabditis briggsae, this protein is Mediator of RNA polymerase II transcription subunit 23 (sur-2).